Reading from the N-terminus, the 543-residue chain is Chaperonin GroEL 4 (543 aa).

ATP-binding positions include 29–32 (TLGP), 86–90 (DGTTT), G411, 476–478 (DAA), and D492.

The protein belongs to the chaperonin (HSP60) family. Forms a cylinder of 14 subunits composed of two heptameric rings stacked back-to-back. Interacts with the co-chaperonin GroES.

It is found in the cytoplasm. The catalysed reaction is ATP + H2O + a folded polypeptide = ADP + phosphate + an unfolded polypeptide.. In terms of biological role, together with its co-chaperonin GroES, plays an essential role in assisting protein folding. The GroEL-GroES system forms a nano-cage that allows encapsulation of the non-native substrate proteins and provides a physical environment optimized to promote and accelerate protein folding. This is Chaperonin GroEL 4 from Bradyrhizobium diazoefficiens (strain JCM 10833 / BCRC 13528 / IAM 13628 / NBRC 14792 / USDA 110).